Here is a 431-residue protein sequence, read N- to C-terminus: tRNA(Ile)-lysidine synthase (431 aa).

19 to 24 (STGIDS) contributes to the ATP binding site.

It belongs to the tRNA(Ile)-lysidine synthase family.

It is found in the cytoplasm. It catalyses the reaction cytidine(34) in tRNA(Ile2) + L-lysine + ATP = lysidine(34) in tRNA(Ile2) + AMP + diphosphate + H(+). Its function is as follows. Ligates lysine onto the cytidine present at position 34 of the AUA codon-specific tRNA(Ile) that contains the anticodon CAU, in an ATP-dependent manner. Cytidine is converted to lysidine, thus changing the amino acid specificity of the tRNA from methionine to isoleucine. The polypeptide is tRNA(Ile)-lysidine synthase (Staphylococcus aureus (strain MW2)).